The following is a 139-amino-acid chain: Acidic phospholipase A2 DE-I (139 aa).

The first 16 residues, 1–16, serve as a signal peptide directing secretion; that stretch reads MRTLWIMAVLLLGVEG. 7 disulfides stabilise this stretch: Cys42–Cys132, Cys44–Cys60, Cys59–Cys111, Cys65–Cys139, Cys66–Cys104, Cys73–Cys97, and Cys91–Cys102. Residues Tyr43, Gly45, and Gly47 each coordinate Ca(2+). His63 is an active-site residue. Asp64 serves as a coordination point for Ca(2+). The active site involves Asp105.

Requires Ca(2+) as cofactor. In terms of tissue distribution, expressed by the venom gland.

It localises to the secreted. It catalyses the reaction a 1,2-diacyl-sn-glycero-3-phosphocholine + H2O = a 1-acyl-sn-glycero-3-phosphocholine + a fatty acid + H(+). Its function is as follows. Snake venom phospholipase A2 (PLA2) that inhibits the ADP- and collagen-induced human platelet aggregation. Exhibits high hydrolytic activities and preferred the anionic micelles to the zwitterionic micelles. PLA2 catalyzes the calcium-dependent hydrolysis of the 2-acyl groups in 3-sn-phosphoglycerides. In Ovophis okinavensis (Ryukyu Island pit viper), this protein is Acidic phospholipase A2 DE-I.